We begin with the raw amino-acid sequence, 74 residues long: UPF0435 protein GTNG_0390 (74 aa).

The protein belongs to the UPF0435 family.

The protein is UPF0435 protein GTNG_0390 of Geobacillus thermodenitrificans (strain NG80-2).